The sequence spans 130 residues: Small ribosomal subunit protein uS11c (130 aa).

This sequence belongs to the universal ribosomal protein uS11 family. As to quaternary structure, part of the 30S ribosomal subunit.

The protein resides in the plastid. The protein localises to the chloroplast. This is Small ribosomal subunit protein uS11c from Psilotum nudum (Whisk fern).